Reading from the N-terminus, the 339-residue chain is GTPase Era (339 aa).

The region spanning arginine 4–serine 48 is the RPE1 insert domain. Positions lysine 51–tryptophan 220 constitute an Era-type G domain. A G1 region spans residues glycine 59–serine 66. Position 59 to 66 (glycine 59 to serine 66) interacts with GTP. A G2 region spans residues glutamine 85 to serine 89. Positions aspartate 106–glycine 109 are G3. GTP is bound by residues aspartate 106 to isoleucine 110 and asparagine 168 to aspartate 171. The segment at asparagine 168–aspartate 171 is G4. A G5 region spans residues isoleucine 196 to alanine 198. In terms of domain architecture, KH type-2 spans leucine 248–glutamate 325.

Belongs to the TRAFAC class TrmE-Era-EngA-EngB-Septin-like GTPase superfamily. Era GTPase family. In terms of assembly, monomer.

The protein localises to the cytoplasm. The protein resides in the cell inner membrane. Functionally, an essential GTPase that binds both GDP and GTP, with rapid nucleotide exchange. Plays a role in 16S rRNA processing and 30S ribosomal subunit biogenesis and possibly also in cell cycle regulation and energy metabolism. The polypeptide is GTPase Era (Rickettsia conorii (strain ATCC VR-613 / Malish 7)).